Reading from the N-terminus, the 170-residue chain is Photosystem I assembly protein Ycf3 (170 aa).

TPR repeat units lie at residues 35–68, 72–105, and 120–153; these read AFTH…EIDP, SYIL…NSSL, and GEQA…APSN.

The protein belongs to the Ycf3 family.

Its subcellular location is the plastid. The protein localises to the chloroplast thylakoid membrane. Functionally, essential for the assembly of the photosystem I (PSI) complex. May act as a chaperone-like factor to guide the assembly of the PSI subunits. The sequence is that of Photosystem I assembly protein Ycf3 from Anthoceros angustus (Hornwort).